The following is a 429-amino-acid chain: Serine carboxypeptidase-like (429 aa).

3 cysteine pairs are disulfide-bonded: Cys-58/Cys-298, Cys-226/Cys-241, and Cys-264/Cys-269. Asn-76 carries an N-linked (GlcNAc...) asparagine glycan. The active site involves Ser-148. Asp-336 is a catalytic residue. A substrate-binding site is contributed by Cys-339. Residue His-393 is part of the active site. Residues Asn-414 and Asn-417 are each glycosylated (N-linked (GlcNAc...) asparagine).

This sequence belongs to the peptidase S10 family. As to expression, abundant in germinated embryos composed of leaf, root, and scutellum.

This chain is Serine carboxypeptidase-like (CBP31), found in Oryza sativa subsp. japonica (Rice).